The sequence spans 307 residues: MSKHVAVLMGGWSSEREISLRSGNACAEALEGEGYRVTRVDVGPDIATVLTDLKPDAALNALHGPAGEDGTIQGLLEILKIPYTHSGVLASALAMHKERAKTVMRAAGVSVPEGRVVNRHDAAKSHPLTPPYVVKPIAEGSSMGVIIVREERSHPPQILASDEWVYGEEVLAETYIAGRELTCAVLGDRALGVTEIKPVSGEWYDFDAKYAGGGSIHVLPADLKLNIYQRVQELALTAHQALGCRGVSRADLRYDDTPGGTGALVVLEVNTQPGMTQTSLVPEIAAHAGLSFGELVRWMVEDASLNR.

An ATP-grasp domain is found at 101 to 301 (KTVMRAAGVS…FGELVRWMVE (201 aa)). Residue 127–182 (PLTPPYVVKPIAEGSSMGVIIVREERSHPPQILASDEWVYGEEVLAETYIAGRELT) participates in ATP binding. Residues aspartate 251, glutamate 268, and asparagine 270 each contribute to the Mg(2+) site.

This sequence belongs to the D-alanine--D-alanine ligase family. Mg(2+) is required as a cofactor. Mn(2+) serves as cofactor.

The protein resides in the cytoplasm. The catalysed reaction is 2 D-alanine + ATP = D-alanyl-D-alanine + ADP + phosphate + H(+). Its pathway is cell wall biogenesis; peptidoglycan biosynthesis. Functionally, cell wall formation. The sequence is that of D-alanine--D-alanine ligase from Methylorubrum populi (strain ATCC BAA-705 / NCIMB 13946 / BJ001) (Methylobacterium populi).